Consider the following 60-residue polypeptide: MARLKITQTKSYIGSKQNHRDTLRSLGLKRLNDSVVKEDRPEFRGMVQTVRHLVTVEEVD.

The protein belongs to the universal ribosomal protein uL30 family. As to quaternary structure, part of the 50S ribosomal subunit.

This Streptomyces filamentosus (Streptomyces roseosporus) protein is Large ribosomal subunit protein uL30.